Reading from the N-terminus, the 1134-residue chain is Ankyrin repeat and SAM domain-containing protein 1A (1134 aa).

Gly2 bears the N-acetylglycine mark. Gly residues predominate over residues 33–55; that stretch reads GGGGGGGSGGGGGGSGGGGGGLG. The interval 33–57 is disordered; the sequence is GGGGGGGSGGGGGGSGGGGGGLGSS. 6 ANK repeats span residues 79–108, 112–141, 148–177, 181–210, 214–243, and 246–275; these read TGYT…LTNV, KGCY…SHTR, DNET…DPTM, KFET…NLLS, KKHT…DSNY, and EMGS…DVNI. Residues 305–317 show a composition bias toward basic and acidic residues; it reads HMTGKRSTKEVDK. Disordered regions lie at residues 305 to 338, 375 to 422, and 469 to 498; these read HMTG…KSQG, SMAS…EEDH, and VDGK…VPEQ. Thr318 bears the Phosphothreonine mark. Positions 328–337 are enriched in polar residues; the sequence is SMDSISQKSQ. The span at 382–392 shows a compositional bias: basic and acidic residues; the sequence is SDQDSTNKEAE. Phosphoserine is present on Ser507. The interval 569 to 650 is disordered; it reads LTGLPTTNSR…MGSRSESLSN (82 aa). Residues 572 to 588 show a composition bias toward polar residues; sequence LPTTNSRSHPETLTHTA. Residues 613 to 628 show a composition bias toward basic and acidic residues; the sequence is PKAELKLSRSLSKSDS. 10 positions are modified to phosphoserine: Ser620, Ser622, Ser624, Ser626, Ser628, Ser647, Ser661, Ser663, Ser666, and Ser677. Positions 633–650 are enriched in polar residues; it reads CSPTEDATMGSRSESLSN. 2 SAM domains span residues 696–762 and 770–837; these read TLEQ…LPKV and NSPP…YEEP. A compositionally biased stretch (polar residues) spans 856-868; that stretch reads TSSPLSQNDSCTG. 2 disordered regions span residues 856-896 and 1079-1134; these read TSSP…APSR and AEMI…LSTN. Ser887 bears the Phosphoserine mark. The PID domain occupies 936 to 1091; that stretch reads IFESCGYEAN…IETKSSKPVP (156 aa). Residues 1123–1134 show a composition bias toward basic and acidic residues; the sequence is PKPDSKRSLSTN.

Interacts (via SAM domain) with EPHA2 (via SAM domain). Interacts with EPHA8; EPHA8 kinase activity-independent but stimulated by EPHA8 ubiquitination. Interacts (via SAM domain) with EPHA6 (via SAM domain). Phosphorylated on tyrosine residues in response to EGF and PDGF. Widely expressed (at protein level).

Its subcellular location is the cytoplasm. The protein localises to the cell projection. In terms of biological role, regulator of different signaling pathways. Regulates EPHA8 receptor tyrosine kinase signaling to control cell migration and neurite retraction. This Homo sapiens (Human) protein is Ankyrin repeat and SAM domain-containing protein 1A (ANKS1A).